The sequence spans 502 residues: tRNA-specific adenosine deaminase 1 (502 aa).

The A to I editase domain maps to 63-501 (SMGTGTKCIG…IRNPPDYHQF (439 aa)). His-87 lines the Zn(2+) pocket. The Proton donor role is filled by Glu-89. 1D-myo-inositol hexakisphosphate-binding residues include Arg-93 and Arg-94. Cys-142 contributes to the Zn(2+) binding site. Phosphoserine is present on Ser-191. Residue Cys-299 participates in Zn(2+) binding. Lys-302, Arg-305, Lys-435, and Lys-470 together coordinate 1D-myo-inositol hexakisphosphate.

Belongs to the ADAT1 family. 1D-myo-inositol hexakisphosphate is required as a cofactor.

It carries out the reaction adenosine(37) in tRNA(Ala) + H2O + H(+) = inosine(37) in tRNA(Ala) + NH4(+). Its function is as follows. Specifically deaminates adenosine-37 to inosine in tRNA-Ala. This chain is tRNA-specific adenosine deaminase 1 (ADAT1), found in Macaca fascicularis (Crab-eating macaque).